Reading from the N-terminus, the 349-residue chain is Anthranilate phosphoribosyltransferase (349 aa).

5-phospho-alpha-D-ribose 1-diphosphate is bound by residues Gly87, 90 to 91 (GD), Thr95, 97 to 100 (NIST), 115 to 123 (KHGNRSVSS), and Ser127. Gly87 serves as a coordination point for anthranilate. Residue Ser99 participates in Mg(2+) binding. Asn118 provides a ligand contact to anthranilate. Arg173 contributes to the anthranilate binding site. Positions 231 and 232 each coordinate Mg(2+).

Belongs to the anthranilate phosphoribosyltransferase family. In terms of assembly, homodimer. The cofactor is Mg(2+).

The enzyme catalyses N-(5-phospho-beta-D-ribosyl)anthranilate + diphosphate = 5-phospho-alpha-D-ribose 1-diphosphate + anthranilate. It participates in amino-acid biosynthesis; L-tryptophan biosynthesis; L-tryptophan from chorismate: step 2/5. Its function is as follows. Catalyzes the transfer of the phosphoribosyl group of 5-phosphorylribose-1-pyrophosphate (PRPP) to anthranilate to yield N-(5'-phosphoribosyl)-anthranilate (PRA). This chain is Anthranilate phosphoribosyltransferase, found in Shewanella loihica (strain ATCC BAA-1088 / PV-4).